The sequence spans 529 residues: Probable cytochrome P450 6t1 (529 aa).

Cys472 contacts heme.

The protein belongs to the cytochrome P450 family. Heme is required as a cofactor.

It localises to the endoplasmic reticulum membrane. The protein resides in the microsome membrane. Functionally, may be involved in the metabolism of insect hormones and in the breakdown of synthetic insecticides. In Drosophila melanogaster (Fruit fly), this protein is Probable cytochrome P450 6t1 (Cyp6t1).